A 354-amino-acid polypeptide reads, in one-letter code: Photosystem II protein D1 2 (354 aa).

3 helical membrane passes run 29–46, 118–133, and 142–156; these read YIGW…TATT, HFLI…EWEL, and WIAV…AATA. Residue His-118 coordinates chlorophyll a. Tyr-126 lines the pheophytin a pocket. Residues Asp-170 and Glu-189 each contribute to the [CaMn4O5] cluster site. The helical transmembrane segment at 197–218 threads the bilayer; that stretch reads FHQLGVAGVFGGALFSAMHGSL. His-198 lines the chlorophyll a pocket. A quinone is bound by residues His-215 and 264–265; that span reads SF. Position 215 (His-215) interacts with Fe cation. Position 272 (His-272) interacts with Fe cation. A helical transmembrane segment spans residues 274-288; the sequence is FLAAWPVIGIWFTAL. Residues His-332, Glu-333, Asp-342, and Ala-344 each contribute to the [CaMn4O5] cluster site. Residues 345 to 354 constitute a propeptide that is removed on maturation; it reads AVEVAPAVRG.

It belongs to the reaction center PufL/M/PsbA/D family. In terms of assembly, PSII is composed of 1 copy each of membrane proteins PsbA, PsbB, PsbC, PsbD, PsbE, PsbF, PsbH, PsbI, PsbJ, PsbK, PsbL, PsbM, PsbT, PsbX, PsbY, PsbZ, Psb30/Ycf12, peripheral proteins PsbO, CyanoQ (PsbQ), PsbU, PsbV and a large number of cofactors. It forms dimeric complexes. The cofactor is The D1/D2 heterodimer binds P680, chlorophylls that are the primary electron donor of PSII, and subsequent electron acceptors. It shares a non-heme iron and each subunit binds pheophytin, quinone, additional chlorophylls, carotenoids and lipids. D1 provides most of the ligands for the Mn4-Ca-O5 cluster of the oxygen-evolving complex (OEC). There is also a Cl(-1) ion associated with D1 and D2, which is required for oxygen evolution. The PSII complex binds additional chlorophylls, carotenoids and specific lipids.. Tyr-161 forms a radical intermediate that is referred to as redox-active TyrZ, YZ or Y-Z. In terms of processing, C-terminally processed by CtpA; processing is essential to allow assembly of the oxygen-evolving complex and thus photosynthetic growth.

The protein localises to the cellular thylakoid membrane. The enzyme catalyses 2 a plastoquinone + 4 hnu + 2 H2O = 2 a plastoquinol + O2. Photosystem II (PSII) is a light-driven water:plastoquinone oxidoreductase that uses light energy to abstract electrons from H(2)O, generating O(2) and a proton gradient subsequently used for ATP formation. It consists of a core antenna complex that captures photons, and an electron transfer chain that converts photonic excitation into a charge separation. The D1/D2 (PsbA/PsbD) reaction center heterodimer binds P680, the primary electron donor of PSII as well as several subsequent electron acceptors. The protein is Photosystem II protein D1 2 of Synechococcus sp. (strain JA-2-3B'a(2-13)) (Cyanobacteria bacterium Yellowstone B-Prime).